The following is a 153-amino-acid chain: MVVLNPNNWHWVDKNTLPWSKDYLNGKLTSLSTVSSDGKSKIELTQVSSITGDSNVSQRKGKPICYFDLQLSMNVKVTNLDTNKDDEDDDGILADGKLEIPEFMHDESDIPILSQGFDAFDGLVRSEFVPKVVETLLKYQDDLIKEHSKDIQV.

Belongs to the AHA1 family. As to quaternary structure, monomer. Interacts with HSP82.

It is found in the cytoplasm. The protein localises to the nucleus. Its function is as follows. Co-chaperone that binds to the molecular chaperone HSP82 and stimulates its ATPase activity. Although not essential, it confers thermotolerance when intracellular levels of HSP82 are limiting. The sequence is that of Hsp90 co-chaperone HCH1 (HCH1) from Saccharomyces cerevisiae (strain ATCC 204508 / S288c) (Baker's yeast).